The sequence spans 467 residues: Asparagine--tRNA ligase (467 aa).

The protein belongs to the class-II aminoacyl-tRNA synthetase family. In terms of assembly, homodimer.

The protein resides in the cytoplasm. The catalysed reaction is tRNA(Asn) + L-asparagine + ATP = L-asparaginyl-tRNA(Asn) + AMP + diphosphate + H(+). The polypeptide is Asparagine--tRNA ligase (Glaesserella parasuis serovar 5 (strain SH0165) (Haemophilus parasuis)).